The chain runs to 337 residues: MPQDVDFHIPLPGRQSPDFARADAEQLAWPRSLGLINSEAAAERHLRGGYADLASRFYPHATGADLDLGVDLMSWFFLFDDLFDGPRGENPQETKQLTDAVAAALDGPLPDTAPPIAHGFADIWRRTSEGMTPAWCARSARHWRSYFDGYVDEAESRFWDTPYDSAAQYLAVRRQTIGVQPTVDLAERAGRFEVPHRVFDSAVLSAMLQIAVDVNLLLNDIASLEKEEARGEQNNMVMILRREHGWSKDRSVAHIQSEVRVRLEQYLVLESCLPQVGDIYRLDDAEREALERYRDDAVRTVIRGSYDWHRSSGRYDAEFALAAGAQGYLEELGRITH.

Mg(2+)-binding residues include D80, D84, N219, S223, and E227. The DDXXD motif signature appears at 80–84 (DDLFD).

It belongs to the terpene synthase family. As to quaternary structure, monomer. Mg(2+) is required as a cofactor.

It carries out the reaction (2E,6E)-farnesyl diphosphate = pentalenene + diphosphate. Its pathway is sesquiterpene biosynthesis; pentalenene biosynthesis; pentalenene from farnesyl diphosphate: step 1/1. It functions in the pathway antibiotic biosynthesis; pentalenolactone biosynthesis. Catalyzes the cyclization of farnesyl diphosphate (FPP) to the tricyclic sesquiterpene pentalenene, which is the hydrocarbon precursor of the pentalenolactone family of antibiotics produced by a variety of Streptomyces species. This chain is Pentalenene synthase (pntA), found in Streptomyces arenae.